The chain runs to 39 residues: Larval cuticle protein SC6 (39 aa).

The Chitin-binding type R&amp;R domain maps to 15–39 (VDQFKYGLELDNSIKADQEGHLEGD).

Component of the cuticle of the larva of flesh fly. In Sarcophaga bullata (Grey flesh fly), this protein is Larval cuticle protein SC6.